Consider the following 307-residue polypeptide: Probable GTP 3',8-cyclase (307 aa).

A Radical SAM core domain is found at 5–227 (AYGRRISSLR…RRTKYYLGGA (223 aa)). GTP is bound at residue Arg-14. Cys-21 and Cys-25 together coordinate [4Fe-4S] cluster. S-adenosyl-L-methionine is bound at residue Tyr-27. Cys-28 lines the [4Fe-4S] cluster pocket. A GTP-binding site is contributed by Lys-61. Gly-65 serves as a coordination point for S-adenosyl-L-methionine. Thr-89 lines the GTP pocket. Ser-113 contributes to the S-adenosyl-L-methionine binding site. Lys-151 is a binding site for GTP. [4Fe-4S] cluster contacts are provided by Cys-241 and Cys-244. 246 to 248 (RLR) is a GTP binding site. [4Fe-4S] cluster is bound at residue Cys-258.

Belongs to the radical SAM superfamily. MoaA family. The cofactor is [4Fe-4S] cluster.

It catalyses the reaction GTP + AH2 + S-adenosyl-L-methionine = (8S)-3',8-cyclo-7,8-dihydroguanosine 5'-triphosphate + 5'-deoxyadenosine + L-methionine + A + H(+). It functions in the pathway cofactor biosynthesis; molybdopterin biosynthesis. Functionally, catalyzes the cyclization of GTP to (8S)-3',8-cyclo-7,8-dihydroguanosine 5'-triphosphate. In Methanocella arvoryzae (strain DSM 22066 / NBRC 105507 / MRE50), this protein is Probable GTP 3',8-cyclase.